The chain runs to 611 residues: Probable methyltransferase PMT19 (611 aa).

Residues 1–15 lie on the Cytoplasmic side of the membrane; sequence MNPSQQHLPKLCPKR. Residues 16 to 36 form a helical; Signal-anchor for type II membrane protein membrane-spanning segment; that stretch reads LFLFFTPFLLFSLYYILTTIK. At 37–611 the chain is on the lumenal side; that stretch reads TITISSQDRH…TILIVDNSIK (575 aa). N-linked (GlcNAc...) asparagine glycosylation is found at asparagine 68, asparagine 97, asparagine 289, asparagine 408, asparagine 411, and asparagine 587.

This sequence belongs to the methyltransferase superfamily.

It localises to the endoplasmic reticulum membrane. This is Probable methyltransferase PMT19 from Arabidopsis thaliana (Mouse-ear cress).